We begin with the raw amino-acid sequence, 230 residues long: Large ribosomal subunit protein uL1c (230 aa).

Belongs to the universal ribosomal protein uL1 family. In terms of assembly, part of the 50S ribosomal subunit.

It is found in the plastid. The protein resides in the chloroplast. Functionally, binds directly to 23S rRNA. Might be involved in E site tRNA release (Potential). In Phaeodactylum tricornutum (strain CCAP 1055/1), this protein is Large ribosomal subunit protein uL1c (rpl1).